Consider the following 346-residue polypeptide: UPF0065 protein in the TAR-I ttuE-ttuC' intergenic region (346 aa).

Positions 1–46 (MQASMLDSQWRLTIFSPRRKVKVSQMNSRFIAVLLTATILPWVAQA) are cleaved as a signal peptide.

The protein belongs to the UPF0065 (bug) family.

The protein resides in the periplasm. The sequence is that of UPF0065 protein in the TAR-I ttuE-ttuC' intergenic region from Agrobacterium vitis (Rhizobium vitis).